The primary structure comprises 436 residues: GTPase Der (436 aa).

EngA-type G domains are found at residues 4–167 (PVVA…PKEE) and 176–351 (VKFS…DNHS). Residues 10 to 17 (GRPNVGKS), 57 to 61 (DTGGI), 119 to 122 (NKVD), 182 to 189 (GRPNVGKS), 229 to 233 (DTAGM), and 294 to 297 (NKWD) contribute to the GTP site. The KH-like domain maps to 352-436 (LRVQSSMLND…PIRVIARKRK (85 aa)).

This sequence belongs to the TRAFAC class TrmE-Era-EngA-EngB-Septin-like GTPase superfamily. EngA (Der) GTPase family. Associates with the 50S ribosomal subunit.

Functionally, GTPase that plays an essential role in the late steps of ribosome biogenesis. This is GTPase Der from Listeria monocytogenes serotype 4b (strain F2365).